The chain runs to 233 residues: uncharacterized protein (233 aa).

A disordered region spans residues 190–233 (LNTSLSEDDTESIVETDYSEEEKESISETESSSDDESYSLYDSF). The segment covering 195–212 (SEDDTESIVETDYSEEEK) has biased composition (acidic residues).

This sequence belongs to the asfivirus DP238L family.

This is an uncharacterized protein from Ornithodoros (relapsing fever ticks).